We begin with the raw amino-acid sequence, 646 residues long: Pentatricopeptide repeat-containing protein At5g48910 (646 aa).

A disordered region spans residues 1-24 (MNPTQTLFSPGGNSPASSPASHPS). Low complexity predominate over residues 9 to 24 (SPGGNSPASSPASHPS). PPR repeat units follow at residues 54-88 (DTLAAAEILRFCATSDLHHRDLDYAHKIFNQMPQR), 89-126 (NCFSWNTIIRGFSESDEDKALIAITLFYEMMSDEFVEP), 127-161 (NRFTFPSVLKACAKTGKIQEGKQIHGLALKYGFGG), 162-197 (DEFVMSNLVRMYVMCGFMKDARVLFYKNIIEKDMVV), 207-237 (EIVLWNVMIDGYMRLGDCKAARMLFDKMRQR), 238-272 (SVVSWNTMISGYSLNGFFKDAVEVFREMKKGDIRP), 273-307 (NYVTLVSVLPAISRLGSLELGEWLHLYAEDSGIRI), 308-338 (DDVLGSALIDMYSKCGIIEKAIHVFERLPRE), 339-373 (NVITWSAMINGFAIHGQAGDAIDCFCKMRQAGVRP), 374-409 (SDVAYINLLTACSHGGLVEEGRRYFSQMVSVDGLEP), and 410-440 (RIEHYGCMVDLLGRSGLLDEAEEFILNMPIK). The interval 445 to 520 (IWKALLGACR…DPGCSLIDID (76 aa)) is type E motif. The tract at residues 521–551 (GVLHEFVVEDDSHPKAKEINSMLVEISDKLR) is type E(+) motif. The interval 552–646 (LAGYRPITTQ…DGSCSCMDYW (95 aa)) is type DYW motif.

It belongs to the PPR family. PCMP-H subfamily.

This chain is Pentatricopeptide repeat-containing protein At5g48910 (PCMP-H38), found in Arabidopsis thaliana (Mouse-ear cress).